Consider the following 245-residue polypeptide: 3-deoxy-manno-octulosonate cytidylyltransferase (245 aa).

The protein belongs to the KdsB family.

Its subcellular location is the cytoplasm. The catalysed reaction is 3-deoxy-alpha-D-manno-oct-2-ulosonate + CTP = CMP-3-deoxy-beta-D-manno-octulosonate + diphosphate. The protein operates within nucleotide-sugar biosynthesis; CMP-3-deoxy-D-manno-octulosonate biosynthesis; CMP-3-deoxy-D-manno-octulosonate from 3-deoxy-D-manno-octulosonate and CTP: step 1/1. It functions in the pathway bacterial outer membrane biogenesis; lipopolysaccharide biosynthesis. Functionally, activates KDO (a required 8-carbon sugar) for incorporation into bacterial lipopolysaccharide in Gram-negative bacteria. The chain is 3-deoxy-manno-octulosonate cytidylyltransferase from Fusobacterium nucleatum subsp. nucleatum (strain ATCC 25586 / DSM 15643 / BCRC 10681 / CIP 101130 / JCM 8532 / KCTC 2640 / LMG 13131 / VPI 4355).